We begin with the raw amino-acid sequence, 399 residues long: Flavohemoprotein (399 aa).

Residues 1-138 (MLDNKTIEII…IADAFIGIEK (138 aa)) form the Globin domain. Histidine 85 is a heme b binding site. Active-site charge relay system residues include tyrosine 95 and glutamate 137. Positions 149-399 (GGWKEYKPFV…GPQLSLAQSV (251 aa)) are reductase. Positions 152-255 (KEYKPFVIAK…SAPAGDFVLD (104 aa)) constitute an FAD-binding FR-type domain. Residues tyrosine 190 and 206 to 209 (RQYS) contribute to the FAD site. NADP(+) is bound at residue 268-273 (GVGITP). 388-391 (LFGP) lines the FAD pocket.

It belongs to the globin family. Two-domain flavohemoproteins subfamily. This sequence in the C-terminal section; belongs to the flavoprotein pyridine nucleotide cytochrome reductase family. Requires heme b as cofactor. FAD serves as cofactor.

The enzyme catalyses 2 nitric oxide + NADPH + 2 O2 = 2 nitrate + NADP(+) + H(+). The catalysed reaction is 2 nitric oxide + NADH + 2 O2 = 2 nitrate + NAD(+) + H(+). In terms of biological role, is involved in NO detoxification in an aerobic process, termed nitric oxide dioxygenase (NOD) reaction that utilizes O(2) and NAD(P)H to convert NO to nitrate, which protects the bacterium from various noxious nitrogen compounds. Therefore, plays a central role in the inducible response to nitrosative stress. This Bacillus subtilis (strain 168) protein is Flavohemoprotein (hmp).